A 237-amino-acid chain; its full sequence is Sugar fermentation stimulation protein homolog (237 aa).

The protein belongs to the SfsA family.

This is Sugar fermentation stimulation protein homolog from Synechocystis sp. (strain ATCC 27184 / PCC 6803 / Kazusa).